The primary structure comprises 265 residues: Phosphonates import ATP-binding protein PhnC 1 (265 aa).

The ABC transporter domain maps to 3-247 (LRLSAIELRH…HLDTLYANEQ (245 aa)). 36–43 (GPSGAGKT) contacts ATP.

It belongs to the ABC transporter superfamily. Phosphonates importer (TC 3.A.1.9.1) family. The complex is composed of two ATP-binding proteins (PhnC), two transmembrane proteins (PhnE) and a solute-binding protein (PhnD).

The protein resides in the cell inner membrane. The catalysed reaction is phosphonate(out) + ATP + H2O = phosphonate(in) + ADP + phosphate + H(+). Functionally, part of the ABC transporter complex PhnCDE involved in phosphonates import. Responsible for energy coupling to the transport system. The sequence is that of Phosphonates import ATP-binding protein PhnC 1 from Pseudomonas syringae pv. syringae (strain B728a).